Here is a 425-residue protein sequence, read N- to C-terminus: Phosphoribosylamine--glycine ligase (425 aa).

Residues 107-312 (KDLCARYNIP…LLVLLNAAVD (206 aa)) enclose the ATP-grasp domain. 133–193 (VDQTGAPIVI…EEFMTGEEAS (61 aa)) is a binding site for ATP. Positions 214-233 (RVGDGDVGPNTGGMGAYSPA) are disordered. Mg(2+)-binding residues include Glu282 and Asn284.

Belongs to the GARS family. Mg(2+) is required as a cofactor. Requires Mn(2+) as cofactor.

The catalysed reaction is 5-phospho-beta-D-ribosylamine + glycine + ATP = N(1)-(5-phospho-beta-D-ribosyl)glycinamide + ADP + phosphate + H(+). It functions in the pathway purine metabolism; IMP biosynthesis via de novo pathway; N(1)-(5-phospho-D-ribosyl)glycinamide from 5-phospho-alpha-D-ribose 1-diphosphate: step 2/2. This is Phosphoribosylamine--glycine ligase from Mesorhizobium japonicum (strain LMG 29417 / CECT 9101 / MAFF 303099) (Mesorhizobium loti (strain MAFF 303099)).